A 463-amino-acid chain; its full sequence is Glycine--tRNA ligase (463 aa).

Arg-98 and Glu-170 together coordinate substrate. Residues 202–204 (RNE), 212–217 (FRTREF), 287–288 (EL), and 331–334 (GIER) contribute to the ATP site. 217–221 (FEQFE) provides a ligand contact to substrate. Residue 327-331 (EPSLG) coordinates substrate.

This sequence belongs to the class-II aminoacyl-tRNA synthetase family. Homodimer.

The protein localises to the cytoplasm. It catalyses the reaction tRNA(Gly) + glycine + ATP = glycyl-tRNA(Gly) + AMP + diphosphate. Catalyzes the attachment of glycine to tRNA(Gly). The sequence is that of Glycine--tRNA ligase from Mycoplasmoides gallisepticum (strain R(low / passage 15 / clone 2)) (Mycoplasma gallisepticum).